A 179-amino-acid polypeptide reads, in one-letter code: Large ribosomal subunit protein uL6 (179 aa).

Belongs to the universal ribosomal protein uL6 family. Part of the 50S ribosomal subunit.

Its function is as follows. This protein binds to the 23S rRNA, and is important in its secondary structure. It is located near the subunit interface in the base of the L7/L12 stalk, and near the tRNA binding site of the peptidyltransferase center. The sequence is that of Large ribosomal subunit protein uL6 from Bifidobacterium animalis subsp. lactis (strain AD011).